The following is a 117-amino-acid chain: Large ribosomal subunit protein uL18 (117 aa).

It belongs to the universal ribosomal protein uL18 family. Part of the 50S ribosomal subunit; part of the 5S rRNA/L5/L18/L25 subcomplex. Contacts the 5S and 23S rRNAs.

Functionally, this is one of the proteins that bind and probably mediate the attachment of the 5S RNA into the large ribosomal subunit, where it forms part of the central protuberance. The chain is Large ribosomal subunit protein uL18 from Tolumonas auensis (strain DSM 9187 / NBRC 110442 / TA 4).